A 156-amino-acid chain; its full sequence is Calglandulin (156 aa).

EF-hand domains lie at 8-43 (EQIT…IGIN), 44-79 (PTKR…YHEK), 82-117 (NQDE…AGEP), and 118-153 (LNEH…ESFK). Positions 131, 133, 135, 137, and 142 each coordinate Ca(2+).

The protein belongs to the calmodulin family. Calglandulin subfamily. Expressed by the venom gland.

Its subcellular location is the cytoplasm. In terms of biological role, may be involved in the cellular control mechanism of the secretion of toxins from the gland into the venom. The polypeptide is Calglandulin (Hoplocephalus stephensii (Stephens's banded snake)).